The following is a 132-amino-acid chain: uncharacterized protein (132 aa).

2 helical membrane passes run 44 to 64 and 75 to 95; these read FMSF…FTFI and IAMI…AMLF.

The protein localises to the cytoplasm. Its subcellular location is the membrane. This is an uncharacterized protein from Schizosaccharomyces pombe (strain 972 / ATCC 24843) (Fission yeast).